Reading from the N-terminus, the 883-residue chain is MPSLNDIRSTFLNYFAKQGHEVVDSSPLVPRNDPTLMFTNSGMVQFKNCFTGVDRRDYVRATTAQKCVRAGGKHNDLDNVGYTARHHTFFEMLGNFSFGDYFKNEAIPFAWELITGEFDIPKDKLYTTVYHTDDEAFEIWKKVGVPEERIIRIATSDNFWQMGDTGPCGPCTEIFYDHGDHIWGGPPGSPEEDGDRFIEIWNLVFMQNERFADGSMVDLDMQSIDTGMGLERIAALLQGTHDNYETDLFKYLIEASATVTKSEPYGDQNVHHRVIADHLRSCSFLIAEGVLPSNEGRGYVLRRIMRRAMRHASLLGATDPVMHKLVPALVSQMGAAYPELGQGQALIEETFEQEETRFLKTLDRGLKLLDDASGDLEKGDVLPGETAFKLYDTFGFPLDLTQDALRAKGIEVDTDGFDAAMKAQKEQSRAGGIGLGDATDVKVYFDIVDAEGTTEFLGYETEKAEGQIVALVKDGARVDSAKAGESVQIILNQTPFYGESGGQVGDSGMLTVEGGAARITDTKKVEGLFLHIAEVTEGEIAVGSGAAMEVDHVRRSQIRANHSATHLLHEALRNALGDHVAQKGSLNAADRLRFDFSHNKAVSAEDLSKISAEVNDFIRQNSAVSTRIMTPDDARALGAQALFGEKYGEEVRVVSMGRAPTGKGADGETYSIELCGGTHVKQTGDIGTFVILGDSASSAGVRRIEALTGAAAFAHLEREAGRMAEVAASLKAQPADVMERLKALMDERKALQNEIATLKQQIAMGGGAGGGAEAKEIGGKTFLGQALQGVSGKDLRGLIDAHKQKIGSGVILLIAEDDGKVAVAAGVTDDLTGEISAVDVLKAAVPAVGGKGGGGRPDMAQGGGKDFSGADEAIKAAEALLKG.

Zn(2+) is bound by residues H562, H566, C675, and H679.

This sequence belongs to the class-II aminoacyl-tRNA synthetase family. Zn(2+) is required as a cofactor.

Its subcellular location is the cytoplasm. The catalysed reaction is tRNA(Ala) + L-alanine + ATP = L-alanyl-tRNA(Ala) + AMP + diphosphate. Functionally, catalyzes the attachment of alanine to tRNA(Ala) in a two-step reaction: alanine is first activated by ATP to form Ala-AMP and then transferred to the acceptor end of tRNA(Ala). Also edits incorrectly charged Ser-tRNA(Ala) and Gly-tRNA(Ala) via its editing domain. The sequence is that of Alanine--tRNA ligase from Ruegeria sp. (strain TM1040) (Silicibacter sp.).